Consider the following 192-residue polypeptide: Orotate phosphoribosyltransferase (192 aa).

A 5-phospho-alpha-D-ribose 1-diphosphate-binding site is contributed by 116–124; that stretch reads EDIVTTGLS. The orotate site is built by threonine 120 and arginine 148.

This sequence belongs to the purine/pyrimidine phosphoribosyltransferase family. PyrE subfamily. Homodimer. Mg(2+) is required as a cofactor.

The catalysed reaction is orotidine 5'-phosphate + diphosphate = orotate + 5-phospho-alpha-D-ribose 1-diphosphate. The protein operates within pyrimidine metabolism; UMP biosynthesis via de novo pathway; UMP from orotate: step 1/2. Its function is as follows. Catalyzes the transfer of a ribosyl phosphate group from 5-phosphoribose 1-diphosphate to orotate, leading to the formation of orotidine monophosphate (OMP). This is Orotate phosphoribosyltransferase from Brucella abortus (strain S19).